Consider the following 56-residue polypeptide: FAAVSVDCSEYPKPACMSEYRPLCGSDNKTYVNKCNFCNAVVESNGTLTLSHFGKC.

The 51-residue stretch at Val6–Cys56 folds into the Kazal-like domain. Cystine bridges form between Cys8-Cys38, Cys16-Cys35, and Cys24-Cys56. Asn45 carries an N-linked (GlcNAc...) asparagine glycan.

The protein localises to the secreted. The protein is Ovomucoid of Colinus virginianus (Northern bobwhite).